A 164-amino-acid chain; its full sequence is Nucleotide-binding protein EF_1165 (164 aa).

It belongs to the YajQ family.

In terms of biological role, nucleotide-binding protein. This chain is Nucleotide-binding protein EF_1165, found in Enterococcus faecalis (strain ATCC 700802 / V583).